A 285-amino-acid polypeptide reads, in one-letter code: Protease HtpX homolog (285 aa).

2 helical membrane-spanning segments follow: residues 7–27 (TAML…MIGG) and 30–50 (GMTI…WFSD). A Zn(2+)-binding site is contributed by His131. Glu132 is a catalytic residue. Residue His135 coordinates Zn(2+). Transmembrane regions (helical) follow at residues 146–166 (ISAT…FFGG) and 177–197 (IAGI…QMAI). Glu202 is a binding site for Zn(2+).

The protein belongs to the peptidase M48B family. Zn(2+) is required as a cofactor.

It localises to the cell inner membrane. The sequence is that of Protease HtpX homolog from Burkholderia thailandensis (strain ATCC 700388 / DSM 13276 / CCUG 48851 / CIP 106301 / E264).